Consider the following 485-residue polypeptide: N-succinylglutamate 5-semialdehyde dehydrogenase (485 aa).

220-225 (GSANTG) lines the NAD(+) pocket. Residues glutamate 243 and cysteine 278 contribute to the active site.

The protein belongs to the aldehyde dehydrogenase family. AstD subfamily.

It catalyses the reaction N-succinyl-L-glutamate 5-semialdehyde + NAD(+) + H2O = N-succinyl-L-glutamate + NADH + 2 H(+). The protein operates within amino-acid degradation; L-arginine degradation via AST pathway; L-glutamate and succinate from L-arginine: step 4/5. Its function is as follows. Catalyzes the NAD-dependent reduction of succinylglutamate semialdehyde into succinylglutamate. This Vibrio vulnificus (strain YJ016) protein is N-succinylglutamate 5-semialdehyde dehydrogenase.